Here is an 83-residue protein sequence, read N- to C-terminus: Sulfur carrier protein TusA (83 aa).

Cys-19 functions as the Cysteine persulfide intermediate in the catalytic mechanism.

This sequence belongs to the sulfur carrier protein TusA family.

It localises to the cytoplasm. Its function is as follows. Sulfur carrier protein which probably makes part of a sulfur-relay system. The sequence is that of Sulfur carrier protein TusA from Vibrio atlanticus (strain LGP32) (Vibrio splendidus (strain Mel32)).